The primary structure comprises 431 residues: MAKIINIIGREIMDSRGNPTVEAEVHLEGGFMGMAAAPSGASTGSREALELRDGDKARYMGKGVLKAVENINGLIRDALMGKDATAQAELDQIMIDVDGTENKDKLGANAILAVSLAAAKAAAAFKGVPLYAHIADLNGTPGQYSMPVPMMNILNGGEHADNNVDIQEFMVQPVGAKSFREALRMGAEIFHSLKSVLKSKGLSTSVGDEGGFAPDLASNADALAIIKVAVEKAGYTLGTDVTLALDCAASEFYKDGQYDLSGEGKVFSANGFSDFLKSLTEQYPIASIEDGLDESDWDGWAYQTQIMGDKIQLVGDDLFVTNTKILKRGIDNGIANSILIKFNQIGSLTETLAAIRMAKDAGYTVVISHRSGETEDATIADLAVATSAGQIKTGSLCRSDRVAKYNQLLRIEEQLGEKAPYNGLKEIKGQA.

Q167 is a binding site for (2R)-2-phosphoglycerate. Catalysis depends on E209, which acts as the Proton donor. Mg(2+) contacts are provided by D246, E289, and D316. Residues K341, R370, S371, and K392 each contribute to the (2R)-2-phosphoglycerate site. K341 serves as the catalytic Proton acceptor.

It belongs to the enolase family. Component of the RNA degradosome, a multiprotein complex involved in RNA processing and mRNA degradation. Requires Mg(2+) as cofactor.

The protein resides in the cytoplasm. The protein localises to the secreted. It localises to the cell surface. The catalysed reaction is (2R)-2-phosphoglycerate = phosphoenolpyruvate + H2O. The protein operates within carbohydrate degradation; glycolysis; pyruvate from D-glyceraldehyde 3-phosphate: step 4/5. In terms of biological role, catalyzes the reversible conversion of 2-phosphoglycerate (2-PG) into phosphoenolpyruvate (PEP). It is essential for the degradation of carbohydrates via glycolysis. The protein is Enolase of Shewanella halifaxensis (strain HAW-EB4).